We begin with the raw amino-acid sequence, 385 residues long: Odorant receptor 82a (385 aa).

Residues 1–32 (MGRLFQLQEYCLRAMGHKDDMDSTDSTALSLK) are Cytoplasmic-facing. A helical transmembrane segment spans residues 33 to 53 (HISSLIFVISAQYPLISYVAY). Residues 54–62 (NRNDMEKVT) lie on the Extracellular side of the membrane. Residues 63–83 (ACLSVVFTNMLTVIKISTFLA) traverse the membrane as a helical segment. Residues 84–131 (NRKDFWEMIHRFRKMHEQSASHIPRYREGLDYVAEANKLASFLGRAYC) lie on the Cytoplasmic side of the membrane. The helical transmembrane segment at 132–152 (VSCGLTGLYFMLGPIVKIGVC) threads the bilayer. The Extracellular portion of the chain corresponds to 153-186 (RWHGTTCDKELPMPMKFPFNDLESPGYEVCFLYT). The chain crosses the membrane as a helical span at residues 187–207 (VLVTVVVVAYASAVDGLFISF). The Cytoplasmic segment spans residues 208–257 (AINLRAHFQTLQRQIENWEFPSSEPDTQIRLKSIVEYHVLLLSLSRKLRS). Residues 258–278 (IYTPTVMGQFVITSLQVGVII) form a helical membrane-spanning segment. Over 279 to 290 (YQLVTNMDSVMD) the chain is Extracellular. Residues 291–311 (LLLYASFFGSIMLQLFIYCYG) traverse the membrane as a helical segment. The Cytoplasmic portion of the chain corresponds to 312-357 (GEIIKAESLQVDTAVRLSNWHLASPKTRTSLSLIILQSQKEVLIRA). The chain crosses the membrane as a helical span at residues 358–378 (GFFVASLANFVGICRTALSLI). Topologically, residues 379–385 (TLIKSIE) are extracellular.

This sequence belongs to the insect chemoreceptor superfamily. Heteromeric odorant receptor channel (TC 1.A.69) family. Or1a subfamily. As to quaternary structure, interacts with Orco. Complexes exist early in the endomembrane system in olfactory sensory neurons (OSNs), coupling these complexes to the conserved ciliary trafficking pathway. In terms of tissue distribution, expressed in olfactory sensory neurons in the antenna.

Its subcellular location is the cell membrane. In terms of biological role, odorant receptor which mediates acceptance or avoidance behavior, depending on its substrates. The odorant receptor repertoire encodes a large collection of odor stimuli that vary widely in identity, intensity, and duration. May form a complex with Orco to form odorant-sensing units, providing sensitive and prolonged odorant signaling and calcium permeability. The polypeptide is Odorant receptor 82a (Or82a) (Drosophila melanogaster (Fruit fly)).